We begin with the raw amino-acid sequence, 224 residues long: Peroxiredoxin-6 (224 aa).

The region spanning leucine 4–leucine 168 is the Thioredoxin domain. The tract at residues aspartate 30–proline 39 is required and sufficient for targeting to lysosomes and lamellar bodies. Residue cysteine 46 is the Cysteine sulfenic acid (-SOH) intermediate; for peroxidase activity of the active site. A Phosphotyrosine modification is found at tyrosine 88. The active-site For phospholipase activity is the aspartate 139. Threonine 176 carries the phosphothreonine; by MAPK modification.

Belongs to the peroxiredoxin family. Prx6 subfamily. As to quaternary structure, homodimer. Interacts with GSTP1; mediates PRDX6 glutathionylation and regeneration. Irreversibly inactivated by overoxidation of Cys-46 to sulfinic acid (Cys-SO(2)H) and sulfonic acid (Cys-SO(3)H) forms upon oxidative stress. Post-translationally, phosphorylation at Thr-176 by MAP kinases increases the phospholipase activity of the enzyme. The phosphorylated form exhibits a greater lysophosphatidylcholine acyltransferase activity compared to the non-phosphorylated form.

It localises to the cytoplasm. The protein resides in the lysosome. It catalyses the reaction a hydroperoxide + 2 glutathione = an alcohol + glutathione disulfide + H2O. The catalysed reaction is a 1,2-diacyl-sn-glycero-3-phosphocholine + H2O = a 1-acyl-sn-glycero-3-phosphocholine + a fatty acid + H(+). The enzyme catalyses a 1-acyl-sn-glycero-3-phosphocholine + an acyl-CoA = a 1,2-diacyl-sn-glycero-3-phosphocholine + CoA. It carries out the reaction 1-hexadecanoyl-sn-glycero-3-phosphocholine + hexadecanoyl-CoA = 1,2-dihexadecanoyl-sn-glycero-3-phosphocholine + CoA. It catalyses the reaction 1,2-dihexadecanoyl-sn-glycero-3-phosphocholine + H2O = 1-hexadecanoyl-sn-glycero-3-phosphocholine + hexadecanoate + H(+). Functionally, thiol-specific peroxidase that catalyzes the reduction of hydrogen peroxide and organic hydroperoxides to water and alcohols, respectively. Can reduce H(2)O(2) and short chain organic, fatty acid, and phospholipid hydroperoxides. Also has phospholipase activity, and can therefore either reduce the oxidized sn-2 fatty acyl group of phospholipids (peroxidase activity) or hydrolyze the sn-2 ester bond of phospholipids (phospholipase activity). These activities are dependent on binding to phospholipids at acidic pH and to oxidized phospholipds at cytosolic pH. Plays a role in cell protection against oxidative stress by detoxifying peroxides and in phospholipid homeostasis. Exhibits acyl-CoA-dependent lysophospholipid acyltransferase which mediates the conversion of lysophosphatidylcholine (1-acyl-sn-glycero-3-phosphocholine or LPC) into phosphatidylcholine (1,2-diacyl-sn-glycero-3-phosphocholine or PC). Shows a clear preference for LPC as the lysophospholipid and for palmitoyl CoA as the fatty acyl substrate. The polypeptide is Peroxiredoxin-6 (PRDX6) (Gallus gallus (Chicken)).